The chain runs to 97 residues: Large ribosomal subunit protein bL27 (97 aa).

The propeptide occupies 1-12 (MLKMNLANLQLF). The tract at residues 14–37 (HKKGGGSTSNGRDSQAKRLGAKAA) is disordered.

This sequence belongs to the bacterial ribosomal protein bL27 family. In terms of processing, the N-terminus is cleaved by ribosomal processing cysteine protease Prp.

The sequence is that of Large ribosomal subunit protein bL27 from Streptococcus gordonii (strain Challis / ATCC 35105 / BCRC 15272 / CH1 / DL1 / V288).